The primary structure comprises 90 residues: Probable Fe(2+)-trafficking protein (90 aa).

Belongs to the Fe(2+)-trafficking protein family.

Functionally, could be a mediator in iron transactions between iron acquisition and iron-requiring processes, such as synthesis and/or repair of Fe-S clusters in biosynthetic enzymes. The polypeptide is Probable Fe(2+)-trafficking protein (Stutzerimonas stutzeri (strain A1501) (Pseudomonas stutzeri)).